Here is a 575-residue protein sequence, read N- to C-terminus: Electron transfer flavoprotein-ubiquinone oxidoreductase, mitochondrial (575 aa).

The transit peptide at 1–33 (MQRVLRAAAAGIGHASGHRAPRWGAAAAAARWL) directs the protein to the mitochondrion. 44 to 58 (VVVVGAGPAGLAAAI) is a binding site for FAD. Residues 82–103 (VGAHVLSGNVFEPRALDELIPK) lie within the membrane without spanning it. Gly276 and Gly277 together coordinate a ubiquinone. An intramembrane segment occupies 343–363 (IPNPVFPGGAIIGCSAGFLNV). [4Fe-4S] cluster contacts are provided by Cys520, Cys544, Cys547, and Cys550. Positions 535-564 (QKLHINAQNCLHCKACDIKDPKQNIEWTVP) constitute a 4Fe-4S ferredoxin-type domain.

It belongs to the ETF-QO/FixC family. Requires [4Fe-4S] cluster as cofactor. FAD serves as cofactor.

Its subcellular location is the mitochondrion inner membrane. The catalysed reaction is a ubiquinone + reduced [electron-transfer flavoprotein] = a ubiquinol + oxidized [electron-transfer flavoprotein] + H(+). In terms of biological role, accepts electrons from ETF and reduces ubiquinone. The polypeptide is Electron transfer flavoprotein-ubiquinone oxidoreductase, mitochondrial (Oryza sativa subsp. japonica (Rice)).